The following is a 217-amino-acid chain: Redox-sensing transcriptional repressor Rex (217 aa).

The H-T-H motif DNA-binding region spans 17–56 (RYLRYVEDLLNHDVLRISSSELSQRMGYTASQVRQDFNNF). 91-96 (GVGNLG) contacts NAD(+).

Belongs to the transcriptional regulatory Rex family. Homodimer.

Its subcellular location is the cytoplasm. Its function is as follows. Modulates transcription in response to changes in cellular NADH/NAD(+) redox state. The sequence is that of Redox-sensing transcriptional repressor Rex from Caldicellulosiruptor bescii (strain ATCC BAA-1888 / DSM 6725 / KCTC 15123 / Z-1320) (Anaerocellum thermophilum).